Reading from the N-terminus, the 698-residue chain is G1/S-specific cyclin CCN1 (698 aa).

The span at 1–11 (MTSLQQQQQQQ) shows a compositional bias: low complexity. 5 disordered regions span residues 1–21 (MTSL…PHHI), 277–326 (QKKQ…DDED), 469–577 (DEDE…GSIL), 599–619 (SNSS…EKRY), and 659–698 (NNTN…QYHQ). Over residues 277–302 (QKKQKKAFSSNSSRTTTASYTHQNQS) the composition is skewed to polar residues. Acidic residues-rich tracts occupy residues 310–326 (DEDI…DDED) and 469–480 (DEDENVSTDDEA). Polar residues-rich tracts occupy residues 493 to 520 (DGNN…NHPQ) and 528 to 567 (PSAT…SSFA). A compositionally biased stretch (polar residues) spans 659–669 (NNTNSSSPLMN). Residues 670–690 (QQQQYYHQQQHQQQVTQSSLY) are compositionally biased toward low complexity.

This sequence belongs to the cyclin family.

Functionally, essential for the control of the cell cycle at the G1/S (start) transition. Interacts with the CDC2 protein kinase to form MPF. This Candida albicans (strain WO-1) (Yeast) protein is G1/S-specific cyclin CCN1 (CCN1).